The chain runs to 131 residues: Small ribosomal subunit protein eS24 (131 aa).

Residue Met-1 is modified to N-acetylmethionine. The residue at position 9 (Thr-9) is a Phosphothreonine. Lys-37 participates in a covalent cross-link: Glycyl lysine isopeptide (Lys-Gly) (interchain with G-Cter in SUMO2). A compositionally biased stretch (basic and acidic residues) spans 90–100; it reads RLARHGLYEKK. The disordered stretch occupies residues 90–131; sequence RLARHGLYEKKKTSRKQRKERKNRMKKVRGTAKANVGAGKKK. Positions 101–119 are enriched in basic residues; that stretch reads KTSRKQRKERKNRMKKVRG.

It belongs to the eukaryotic ribosomal protein eS24 family. As to quaternary structure, component of the small ribosomal subunit. Part of the small subunit (SSU) processome, composed of more than 70 proteins and the RNA chaperone small nucleolar RNA (snoRNA) U3.

It is found in the cytoplasm. The protein localises to the nucleus. Its subcellular location is the nucleolus. In terms of biological role, component of the small ribosomal subunit. The ribosome is a large ribonucleoprotein complex responsible for the synthesis of proteins in the cell. Required for processing of pre-rRNA and maturation of 40S ribosomal subunits. Part of the small subunit (SSU) processome, first precursor of the small eukaryotic ribosomal subunit. During the assembly of the SSU processome in the nucleolus, many ribosome biogenesis factors, an RNA chaperone and ribosomal proteins associate with the nascent pre-rRNA and work in concert to generate RNA folding, modifications, rearrangements and cleavage as well as targeted degradation of pre-ribosomal RNA by the RNA exosome. The protein is Small ribosomal subunit protein eS24 (RPS24) of Macaca fascicularis (Crab-eating macaque).